Here is a 394-residue protein sequence, read N- to C-terminus: Zinc finger and SCAN domain-containing protein 9 (394 aa).

K26 is covalently cross-linked (Glycyl lysine isopeptide (Lys-Gly) (interchain with G-Cter in SUMO2)). One can recognise an SCAN box domain in the interval 52-134 (RRHFRQLCYQ…ILLEDLEREL (83 aa)). Glycyl lysine isopeptide (Lys-Gly) (interchain with G-Cter in SUMO2) cross-links involve residues K215 and K238. 5 consecutive C2H2-type zinc fingers follow at residues 254 to 276 (HKCD…QRIH), 282 to 304 (YECN…RGIH), 310 to 332 (YHCK…QRIH), 338 to 360 (YQCS…QRSH), and 366 to 388 (HQCI…QKIH).

Belongs to the krueppel C2H2-type zinc-finger protein family.

The protein resides in the nucleus. May be involved in transcriptional regulation. The sequence is that of Zinc finger and SCAN domain-containing protein 9 (ZSCAN9) from Homo sapiens (Human).